The following is a 436-amino-acid chain: Histidinol dehydrogenase (436 aa).

Residues Tyr135, Gln196, and Asn219 each coordinate NAD(+). 3 residues coordinate substrate: Ser242, Gln264, and His267. 2 residues coordinate Zn(2+): Gln264 and His267. Catalysis depends on proton acceptor residues Glu332 and His333. The substrate site is built by His333, Asp366, Glu420, and His425. Asp366 is a Zn(2+) binding site. Zn(2+) is bound at residue His425.

It belongs to the histidinol dehydrogenase family. Zn(2+) is required as a cofactor.

The catalysed reaction is L-histidinol + 2 NAD(+) + H2O = L-histidine + 2 NADH + 3 H(+). The protein operates within amino-acid biosynthesis; L-histidine biosynthesis; L-histidine from 5-phospho-alpha-D-ribose 1-diphosphate: step 9/9. In terms of biological role, catalyzes the sequential NAD-dependent oxidations of L-histidinol to L-histidinaldehyde and then to L-histidine. This chain is Histidinol dehydrogenase, found in Methylococcus capsulatus (strain ATCC 33009 / NCIMB 11132 / Bath).